A 305-amino-acid chain; its full sequence is Ribosomal RNA large subunit methyltransferase F (305 aa).

Belongs to the methyltransferase superfamily. METTL16/RlmF family.

It localises to the cytoplasm. The catalysed reaction is adenosine(1618) in 23S rRNA + S-adenosyl-L-methionine = N(6)-methyladenosine(1618) in 23S rRNA + S-adenosyl-L-homocysteine + H(+). Specifically methylates the adenine in position 1618 of 23S rRNA. This Bacteroides fragilis (strain YCH46) protein is Ribosomal RNA large subunit methyltransferase F.